A 241-amino-acid polypeptide reads, in one-letter code: Octanoyltransferase (241 aa).

Residues 43–228 (ADTPDEIWLV…RLTANLDGSP (186 aa)) form the BPL/LPL catalytic domain. Substrate contacts are provided by residues 83–90 (RGGQITYH), 159–161 (ALG), and 172–174 (GVS). Catalysis depends on C190, which acts as the Acyl-thioester intermediate.

It belongs to the LipB family.

It localises to the cytoplasm. It catalyses the reaction octanoyl-[ACP] + L-lysyl-[protein] = N(6)-octanoyl-L-lysyl-[protein] + holo-[ACP] + H(+). The protein operates within protein modification; protein lipoylation via endogenous pathway; protein N(6)-(lipoyl)lysine from octanoyl-[acyl-carrier-protein]: step 1/2. Its function is as follows. Catalyzes the transfer of endogenously produced octanoic acid from octanoyl-acyl-carrier-protein onto the lipoyl domains of lipoate-dependent enzymes. Lipoyl-ACP can also act as a substrate although octanoyl-ACP is likely to be the physiological substrate. This is Octanoyltransferase from Paraburkholderia phytofirmans (strain DSM 17436 / LMG 22146 / PsJN) (Burkholderia phytofirmans).